The primary structure comprises 661 residues: Pentatricopeptide repeat-containing protein At3g04750, mitochondrial (661 aa).

A mitochondrion-targeting transit peptide spans 1 to 18 (MCFVLLLRRGFRLFGTEC). PPR repeat units follow at residues 99–131 (NVFV…RVSP), 132–163 (DRQT…GCLS), 165–195 (GNYL…MPHP), 196–230 (DVSS…GIEP), 231–265 (DEYT…GPVY), 268–298 (NLIL…MKKK), 299–333 (DMRS…DLVS), 334–366 (WNSL…KVKP), 367–401 (DRVT…QLKG), 402–432 (DAFL…ATEK), 433–467 (DVAL…GVTP), 468–498 (NNVT…MKDK), and 504–539 (ETEH…PSQS). Positions 540–615 (MWGSILSACR…TAGYSSVVGV (76 aa)) are type E motif. The type E(+) motif stretch occupies residues 616–647 (EGLHRFVAAEKQNHPRWTEIKRILQHLYNEMK).

Belongs to the PPR family. PCMP-E subfamily.

Its subcellular location is the mitochondrion. In Arabidopsis thaliana (Mouse-ear cress), this protein is Pentatricopeptide repeat-containing protein At3g04750, mitochondrial (PCMP-E81).